Reading from the N-terminus, the 244-residue chain is Phosphoadenosine 5'-phosphosulfate reductase (244 aa).

Residue C239 is the Nucleophile; cysteine thiosulfonate intermediate of the active site.

Belongs to the PAPS reductase family. CysH subfamily.

The protein resides in the cytoplasm. It carries out the reaction [thioredoxin]-disulfide + sulfite + adenosine 3',5'-bisphosphate + 2 H(+) = [thioredoxin]-dithiol + 3'-phosphoadenylyl sulfate. It functions in the pathway sulfur metabolism; hydrogen sulfide biosynthesis; sulfite from sulfate: step 3/3. Functionally, catalyzes the formation of sulfite from phosphoadenosine 5'-phosphosulfate (PAPS) using thioredoxin as an electron donor. This is Phosphoadenosine 5'-phosphosulfate reductase from Klebsiella pneumoniae (strain 342).